We begin with the raw amino-acid sequence, 189 residues long: Large ribosomal subunit protein bL9 (189 aa).

This sequence belongs to the bacterial ribosomal protein bL9 family.

Functionally, binds to the 23S rRNA. This Cereibacter sphaeroides (strain ATCC 17025 / ATH 2.4.3) (Rhodobacter sphaeroides) protein is Large ribosomal subunit protein bL9.